Consider the following 155-residue polypeptide: Sec-independent protein translocase protein TatB (155 aa).

The chain crosses the membrane as a helical span at residues 1-21 (MIDLGISKIALIGAVALIVIG). Disordered stretches follow at residues 81–103 (ASDF…LPGF) and 131–155 (SGIR…SRKA). Residues 89-98 (SETTGSTSSD) show a composition bias toward polar residues.

This sequence belongs to the TatB family. In terms of assembly, the Tat system comprises two distinct complexes: a TatABC complex, containing multiple copies of TatA, TatB and TatC subunits, and a separate TatA complex, containing only TatA subunits. Substrates initially bind to the TatABC complex, which probably triggers association of the separate TatA complex to form the active translocon.

The protein localises to the cell inner membrane. Part of the twin-arginine translocation (Tat) system that transports large folded proteins containing a characteristic twin-arginine motif in their signal peptide across membranes. Together with TatC, TatB is part of a receptor directly interacting with Tat signal peptides. TatB may form an oligomeric binding site that transiently accommodates folded Tat precursor proteins before their translocation. In Polaromonas naphthalenivorans (strain CJ2), this protein is Sec-independent protein translocase protein TatB.